A 527-amino-acid chain; its full sequence is ADP-ribosylation factor-like protein 13B (527 aa).

GTP is bound by residues 26 to 33 (GLDNAGKT), 69 to 73 (DLGGG), and 128 to 131 (NKQD). A compositionally biased stretch (basic and acidic residues) spans 200 to 248 (EEVRQEEARKKKEREERLRKQREERLRQQKEEEERAREVEKENELHDGK). Disordered regions lie at residues 200-252 (EEVR…APSL) and 300-503 (GLPH…FSLV). Positions 381 to 444 (QPSDAGVGSS…GSVFAPRPAS (64 aa)) are enriched in low complexity. The segment covering 445 to 457 (AGGGGPGSRGSGS) has biased composition (gly residues).

The protein belongs to the small GTPase superfamily. Arf family. Monomer.

The protein localises to the cell projection. It is found in the cilium membrane. In terms of biological role, cilium-specific protein required to control the microtubule-based, ciliary axoneme structure. May act by maintaining the association between IFT subcomplexes A and B. The chain is ADP-ribosylation factor-like protein 13B (ARL13) from Chlamydomonas reinhardtii (Chlamydomonas smithii).